An 899-amino-acid polypeptide reads, in one-letter code: Inositol 1,4,5-triphosphate receptor associated 1 (899 aa).

4 disordered regions span residues 32–110 (PGTH…HRHL), 164–286 (RRGR…PLQH), 324–391 (KTAR…EEPG), and 463–486 (AAEQ…SKSG). The segment covering 100-110 (SPHRRLSHRHL) has biased composition (basic residues). The residue at position 106 (Ser-106) is a Phosphoserine. The segment at 140 to 172 (SEEDKKKNLALLEEAKLVSERFLTRRGRKSRSS) is interaction with PRKG1. The span at 171–180 (SSLGDSPSAV) shows a compositional bias: polar residues. Residues 181–203 (SPNLSSGASPASSRSCSLTISTS) are compositionally biased toward low complexity. The span at 266–281 (TVEKTKELTVEQKENF) shows a compositional bias: basic and acidic residues. Positions 333–351 (PRTTAQGSGGTVSPHSLGQ) are enriched in polar residues. Ser-382 is modified (phosphoserine). The interaction with ITPR1 stretch occupies residues 521-567 (NVFVQLSLAFRNDSYTLESRINQAERERNLTEENTEKELENFKASIT). Residues 534–632 (SYTLESRINQ…MQYVENLKRT (99 aa)) are a coiled coil. Residues Ser-670 and Ser-683 each carry the phosphoserine modification. 2 disordered regions span residues 695-722 (LPGQ…SSIS) and 757-818 (TSQE…DQGS). Positions 699 to 715 (APSSSPMPSLPALSESS) are enriched in low complexity. Composition is skewed to basic and acidic residues over residues 759 to 770 (QETKAKAEEEAY) and 777 to 787 (GVKKTEELQDL). Over residues 788 to 814 (KEEEEEEQKTESPEEPEEVEETQEDEK) the composition is skewed to acidic residues. The chain crosses the membrane as a helical span at residues 839–859 (WQVIWMMAAVMLVLSVVLGLY). Positions 867–899 (EEADGPPGRSTCSAAQRDSWWSSGLQQELPAEQ) are disordered. Residues 876–892 (STCSAAQRDSWWSSGLQ) are compositionally biased toward polar residues.

Part of cGMP kinase signaling complex at least composed of ACTA2/alpha-actin, CNN1/calponin H1, PLN/phospholamban, PRKG1 and ITPR1. Interacts with PRKG1/cGKI-beta and ITPR1/IP3R type I. Interacts with HCN4; regulates HCN4 channel activity. In terms of processing, phosphorylated by PRKG1/cGKI. Highly expressed in smooth muscle such as aorta, colon and uterus. Detected in the brain, in the thalamus, in the hippocampus and myenteric plexus. Highly expressed in megakaryocytes. Down-regulated during macrophage differentiation.

Its subcellular location is the membrane. The protein localises to the cytoplasm. It localises to the perinuclear region. It is found in the sarcoplasmic reticulum. In terms of biological role, plays a role as NO/PRKG1-dependent regulator of IP3-induced calcium release; its phosphorylation by PRKG1 inhibits bradykinin and IP3-induced calcium release from intracellular stores. Recruits PRKG1 to the endoplasmic reticulum and may mediate the assembly of PRKG1 and ITPR1 in a macrocomplex. Involved in PRKG1 signaling cascade leading to inhibition of platelet activation and aggregation. Also mediates NO-dependent inhibition of calcium signaling in gastrointestinal smooth muscle contributing to NO-dependent relaxation. Plays a role in the regulation of cellular excitability by regulating the hyperpolarization-activated cyclic nucleotide-gated HCN4 channel activity. This is Inositol 1,4,5-triphosphate receptor associated 1 (Irag1) from Mus musculus (Mouse).